A 97-amino-acid polypeptide reads, in one-letter code: Large ribosomal subunit protein bL21 (97 aa).

This sequence belongs to the bacterial ribosomal protein bL21 family. In terms of assembly, part of the 50S ribosomal subunit. Contacts protein L20.

Its function is as follows. This protein binds to 23S rRNA in the presence of protein L20. The polypeptide is Large ribosomal subunit protein bL21 (Persephonella marina (strain DSM 14350 / EX-H1)).